The following is a 605-amino-acid chain: MWSSPGRNLESGRFNITPRYTGTLSNGSVSSSDKVALSQLTIFNVTVADEGEYTCSVDGESASFRVDLGDSNSSGSNSGVIAGVLITLLLLIALIIILICVFWVVWRYRRRGKFDLGSCRELSCSSCSCVPLLAALKGVKLPTRHRENLNKNGTRLRLNERNHIADTNTEIYSVVQKPLKKISKSPPPLPPLTLTETELNELMSIDEKEELSPIQEKPTRRNTGLSTYSQSGTIPKLAKLTKLRKFKMKENPIYQSADELELELELQVDNTLYALPSKPNSTRNSASFTDDLASDPIYSVAINPSMFTKRSSTIGNDDDLHPYGPIYARPIKQKMRQPLNVSVDNIREVKQIGVGQFGAVVLAEMTGLSGSERCVPTKRDPSMLNGVALVAVKKLKPDVSEEVRQSFDKEIKFVSQLQHDSIVQLLAVCTHSKHPFIVMEYMENGDLNQFLQKYQMVDDDSALYSNQIPPSTLLYMAVQIASGMVYLSSLNYVHRDLATRNCLVGSNFRIKISDFGMSRNLYERVYYRVRGRAMLPIRWMATESFYGRFSEKSDAWAYGVTVWEIYTLGKKQPYEELDDQDMIQDAIRGTGRRIMGRPRGVAGCV.

The Ig-like C2-type domain occupies 1–67; it reads MWSSPGRNLE…DGESASFRVD (67 aa). Over 1 to 84 the chain is Extracellular; it reads MWSSPGRNLE…GSNSGVIAGV (84 aa). Residues asparagine 26, asparagine 44, and asparagine 72 are each glycosylated (N-linked (GlcNAc...) asparagine). The chain crosses the membrane as a helical span at residues 85-105; the sequence is LITLLLLIALIIILICVFWVV. The Cytoplasmic portion of the chain corresponds to 106–605; that stretch reads WRYRRRGKFD…GRPRGVAGCV (500 aa). Positions 209–230 are disordered; the sequence is EELSPIQEKPTRRNTGLSTYSQ. The span at 221–230 shows a compositional bias: polar residues; it reads RNTGLSTYSQ. The Protein kinase domain occupies 346–605; it reads IREVKQIGVG…GRPRGVAGCV (260 aa). Residues 352-360 and lysine 393 contribute to the ATP site; that span reads IGVGQFGAV. Aspartate 496 (proton acceptor) is an active-site residue. Tyrosine 527 is subject to Phosphotyrosine; by autocatalysis.

It belongs to the protein kinase superfamily. Tyr protein kinase family. Insulin receptor subfamily. Post-translationally, phosphorylated.

Its subcellular location is the cell membrane. It catalyses the reaction L-tyrosyl-[protein] + ATP = O-phospho-L-tyrosyl-[protein] + ADP + H(+). The sequence is that of Class II receptor tyrosine kinase (TK) from Geodia cydonium (Sponge).